The sequence spans 357 residues: F-box only protein 25 (357 aa).

The tract at residues 1-83 (MPFLGQDWRS…DTAAHSFYRE (83 aa)) is interaction with beta-actin. The 49-residue stretch at 225 to 273 (LTLSDLPLHMLNNILYRFSDGWDIVTLGQVTPTLYMLSEDRRLWKRLCQ) folds into the F-box domain.

As to quaternary structure, part of a SCF (SKP1-cullin-F-box) protein ligase complex consisting of FBXO25, SKP1, CUL1 and RBX1. Interacts directly with SKP1 and CUL1. Interacts (via C-terminus) with beta-actin (via N-terminus). As to expression, expressed in all tissues tested, except striated muscle (at protein level). Expressed predominantly in the cerebral cortex, the hippocampus and the Purkinje cell layer of the brain. Intestine and kidney show also significant levels.

The protein resides in the nucleus. Its pathway is protein modification; protein ubiquitination. Substrate-recognition component of the SCF (SKP1-CUL1-F-box protein)-type E3 ubiquitin ligase complex. May play a role in accumulation of expanded polyglutamine (polyQ) protein huntingtin (HTT). The protein is F-box only protein 25 (Fbxo25) of Mus musculus (Mouse).